A 1097-amino-acid chain; its full sequence is DNA-directed RNA polymerase subunit beta (1097 aa).

Residues 1072–1097 (QDVNPRRSTPSRPTYESLGVADYDED) form a disordered region.

Belongs to the RNA polymerase beta chain family. In cyanobacteria the RNAP catalytic core is composed of 2 alpha, 1 beta, 1 beta', 1 gamma and 1 omega subunit. When a sigma factor is associated with the core the holoenzyme is formed, which can initiate transcription.

The enzyme catalyses RNA(n) + a ribonucleoside 5'-triphosphate = RNA(n+1) + diphosphate. In terms of biological role, DNA-dependent RNA polymerase catalyzes the transcription of DNA into RNA using the four ribonucleoside triphosphates as substrates. The polypeptide is DNA-directed RNA polymerase subunit beta (Synechococcus sp. (strain WH7803)).